Reading from the N-terminus, the 153-residue chain is Lipoprotein signal peptidase (153 aa).

2 helical membrane passes run 52-72 (ILAG…IGIV) and 81-101 (GQML…GNFI). Residues aspartate 111 and aspartate 129 contribute to the active site. The chain crosses the membrane as a helical span at residues 124–144 (IFNIADSSLCVGVILLFIHML).

This sequence belongs to the peptidase A8 family.

The protein localises to the cell membrane. The catalysed reaction is Release of signal peptides from bacterial membrane prolipoproteins. Hydrolyzes -Xaa-Yaa-Zaa-|-(S,diacylglyceryl)Cys-, in which Xaa is hydrophobic (preferably Leu), and Yaa (Ala or Ser) and Zaa (Gly or Ala) have small, neutral side chains.. The protein operates within protein modification; lipoprotein biosynthesis (signal peptide cleavage). Functionally, this protein specifically catalyzes the removal of signal peptides from prolipoproteins. The chain is Lipoprotein signal peptidase from Bacillus velezensis (strain DSM 23117 / BGSC 10A6 / LMG 26770 / FZB42) (Bacillus amyloliquefaciens subsp. plantarum).